The primary structure comprises 509 residues: Ribonuclease E/G-like protein (509 aa).

The region spanning 35–117 is the S1 motif domain; that stretch reads SDIYLGCVDK…LTANITLSGR (83 aa). Mg(2+) is bound by residues D296 and D339.

It belongs to the RNase E/G family. Mg(2+) is required as a cofactor.

The protein localises to the plastid. It is found in the chloroplast stroma. Functionally, involved in intercistronic processing of primary transcripts from chloroplast operons. The endonucleolytic activity of the enzyme depends on the number of phosphates at the 5' end, is inhibited by structured RNA, and preferentially cleaves A/U-rich sequences. The protein is Ribonuclease E/G-like protein (rne) of Pyropia yezoensis (Susabi-nori).